Here is a 122-residue protein sequence, read N- to C-terminus: Large ribosomal subunit protein uL22 (122 aa).

The protein belongs to the universal ribosomal protein uL22 family. Part of the 50S ribosomal subunit.

Functionally, this protein binds specifically to 23S rRNA; its binding is stimulated by other ribosomal proteins, e.g. L4, L17, and L20. It is important during the early stages of 50S assembly. It makes multiple contacts with different domains of the 23S rRNA in the assembled 50S subunit and ribosome. The globular domain of the protein is located near the polypeptide exit tunnel on the outside of the subunit, while an extended beta-hairpin is found that lines the wall of the exit tunnel in the center of the 70S ribosome. In Caldicellulosiruptor saccharolyticus (strain ATCC 43494 / DSM 8903 / Tp8T 6331), this protein is Large ribosomal subunit protein uL22.